Here is a 177-residue protein sequence, read N- to C-terminus: Transcription antitermination protein NusB (177 aa).

Positions 1-35 are disordered; that stretch reads MTDSTHPTPSARPPRQPRTGTTGTGARKAGSKSGR. Positions 17 to 28 are enriched in low complexity; the sequence is PRTGTTGTGARK.

This sequence belongs to the NusB family.

In terms of biological role, involved in transcription antitermination. Required for transcription of ribosomal RNA (rRNA) genes. Binds specifically to the boxA antiterminator sequence of the ribosomal RNA (rrn) operons. This Acidovorax sp. (strain JS42) protein is Transcription antitermination protein NusB.